The following is a 350-amino-acid chain: C5a anaphylatoxin chemotactic receptor 1 (350 aa).

Residues 1 to 37 lie on the Extracellular side of the membrane; the sequence is MDSFNYTTPDYGHYDDKDTLDPNTPVDKTSNTLRVPD. The tract at residues 10–18 is required for CHIPS binding; the sequence is DYGHYDDKD. Residues Tyr11 and Tyr14 each carry the sulfotyrosine modification. The involved in C5a binding stretch occupies residues 21 to 30; it reads DPNTPVDKTS. The chain crosses the membrane as a helical span at residues 38–64; that stretch reads ILALVIFAVVFLVGVLGNALVVWVTAF. At 65–69 the chain is on the cytoplasmic side; it reads EVKRT. Residues 70-93 traverse the membrane as a helical segment; that stretch reads INAIWFLNLAVADFLSCLALPILF. Residues 94–110 lie on the Extracellular side of the membrane; that stretch reads TSIVQHHHWPFGGAACR. Residues Cys109 and Cys188 are joined by a disulfide bond. The chain crosses the membrane as a helical span at residues 111–132; it reads ILPSLILLNMYASILLLATISA. At 133 to 153 the chain is on the cytoplasmic side; that stretch reads DRFLLVFKPIWCQNFRGAGLA. The chain crosses the membrane as a helical span at residues 154-174; that stretch reads WIACAVAWGLALLLTIPSFLY. Over 175-200 the chain is Extracellular; that stretch reads RVVREEYFPPKVLCGVDYSHDKQRER. The chain crosses the membrane as a helical span at residues 201 to 226; that stretch reads AVAVVRLVLGFLWPLLTLTICYTFIL. Residues 227-242 are Cytoplasmic-facing; that stretch reads LRTWSRRATRSTKTLK. The chain crosses the membrane as a helical span at residues 243-265; it reads VVVAVVASFFIFWLPYQVTGIMM. The Extracellular portion of the chain corresponds to 266–282; sequence SFLEPSSPTFLLLKKLD. A helical membrane pass occupies residues 283 to 303; the sequence is SLCVSFAYINCCINPIIYVVA. The Cytoplasmic portion of the chain corresponds to 304–350; the sequence is GQGFQGRLRKSLPSLLRNVLTEESVVRESKSFTRSTVDTMAEKTQAV. Residues Ser314, Ser317, Ser327, Ser332, Ser334, and Ser338 each carry the phosphoserine modification.

Belongs to the G-protein coupled receptor 1 family. Homodimer. May also form higher-order oligomers. Interacts (when phosphorylated) with ARRB1 and ARRB2; the interaction is associated with internalization of C5aR. Interacts (via N-terminal domain) with S.aureus chemotaxis inhibitory protein (CHIPS); the interaction blocks the receptor and may thus inhibit the immune response. In terms of processing, sulfation plays a critical role in the association of C5aR with C5a, but no significant role in the ability of the receptor to transduce a signal and mobilize calcium in response to a small peptide agonist. Sulfation at Tyr-14 is important for CHIPS binding. Phosphorylated on serine residues in response to C5a binding, resulting in internalization of the receptor and short-term desensitization to C5a.

The protein localises to the cell membrane. Its subcellular location is the cytoplasmic vesicle. Functionally, receptor for the chemotactic and inflammatory peptide anaphylatoxin C5a. The ligand interacts with at least two sites on the receptor: a high-affinity site on the extracellular N-terminus, and a second site in the transmembrane region which activates downstream signaling events. Receptor activation stimulates chemotaxis, granule enzyme release, intracellular calcium release and superoxide anion production. The protein is C5a anaphylatoxin chemotactic receptor 1 (C5AR1) of Gorilla gorilla gorilla (Western lowland gorilla).